The primary structure comprises 936 residues: Calcium homeostasis endoplasmic reticulum protein (936 aa).

An N-acetylmethionine modification is found at Met-1. The SURP motif repeat unit spans residues 15-57 (VIDKLAQFVARNGPEFEKMTMEKQKDNPKFSFLFGGEFYSYYK). An N6-acetyllysine modification is found at Lys-18. Residues 77 to 102 (EPTSAMPPLPQPPLAPTASLTPAQGT) form a disordered region. Pro residues predominate over residues 81-91 (AMPPLPQPPLA). In terms of domain architecture, CID spans 149–289 (ETQLDMSEFD…QLQSPALGLG (141 aa)). A disordered region spans residues 328–646 (LAQQQQQQQQ…RQGPPHINHD (319 aa)). A compositionally biased stretch (low complexity) spans 330-355 (QQQQQQQQQQQQQPQPQPQPQIQLPQ). Positions 363–383 (TPPPPAPPPASAPAPTIPPTT) are enriched in pro residues. A compositionally biased stretch (polar residues) spans 395–405 (PGSSEYDTSAG). Residues 488–500 (PWNNQPDPNWNNQ) show a composition bias toward low complexity. Residues 534–550 (PFPPHQQHPQFNQPPHP) are compositionally biased toward pro residues. Positions 551-560 (HNFNRFPPRF) are enriched in low complexity. Over residues 561–572 (MQDDFPPRHPFE) the composition is skewed to basic and acidic residues. Residues 594–603 (PHHHPGHRMP) show a composition bias toward basic residues. Tyr-723 carries the post-translational modification Phosphotyrosine. A disordered region spans residues 731 to 887 (RARRRKGQEK…DPIKGGDVRD (157 aa)). The span at 748 to 758 (SRSRSKSRGRS) shows a compositional bias: basic residues. Residues 759-773 (SSRSSSRSSKSSRSS) are compositionally biased toward low complexity. Positions 774 to 824 (SRSHSRSRSRSSSRSRSRSRSRSRSSRSRSRSRSRSRSKSYSPGRRRRSRS) are enriched in basic residues. Phosphoserine is present on residues Ser-822, Ser-824, and Ser-826. Thr-828 is subject to Phosphothreonine. A Phosphoserine modification is found at Ser-837. In terms of domain architecture, G-patch spans 850–900 (EENKGHQMLVKMGWSGSGGLGAKEQGIQDPIKGGDVRDKWDQYKGVGVALD). Lys-853 is covalently cross-linked (Glycyl lysine isopeptide (Lys-Gly) (interchain with G-Cter in SUMO2)). Residues Ser-864 and Ser-866 each carry the phosphoserine modification. A Glycyl lysine isopeptide (Lys-Gly) (interchain with G-Cter in SUMO2) cross-link involves residue Lys-881. Lys-888 carries the post-translational modification N6-acetyllysine. Phosphoserine is present on Ser-913.

The protein localises to the cytoplasm. Its subcellular location is the perinuclear region. It is found in the endoplasmic reticulum. Involved in calcium homeostasis, growth and proliferation. This is Calcium homeostasis endoplasmic reticulum protein from Mus musculus (Mouse).